The chain runs to 421 residues: Na(+)/H(+) antiporter NhaA 1 (421 aa).

Helical transmembrane passes span 48–68 (SSGL…NSPW), 93–113 (LYWW…GLEI), 129–149 (SLAL…YTLV), 157–177 (AGWG…LALL), 187–207 (VLLA…IALF), 215–235 (LALG…AAGV), 253–273 (LASG…IPLG), 299–319 (FLIL…GGSL), 326–346 (VVLG…WLAV), 364–384 (GLGL…GLAF), and 392–412 (AAKL…ITVL).

Belongs to the NhaA Na(+)/H(+) (TC 2.A.33) antiporter family.

Its subcellular location is the cell membrane. The enzyme catalyses Na(+)(in) + 2 H(+)(out) = Na(+)(out) + 2 H(+)(in). In terms of biological role, na(+)/H(+) antiporter that extrudes sodium in exchange for external protons. This chain is Na(+)/H(+) antiporter NhaA 1, found in Deinococcus geothermalis (strain DSM 11300 / CIP 105573 / AG-3a).